The following is a 532-amino-acid chain: Bone morphogenetic protein receptor type-1A (532 aa).

Positions 1–23 (MTQLYTYIRLLGACLFIISHVQG) are cleaved as a signal peptide. The Extracellular segment spans residues 24–152 (QNLDSMLHGT…IGPFFDGSVR (129 aa)). Disulfide bonds link C61–C82, C63–C67, and C76–C100. N73 is a glycosylation site (N-linked (GlcNAc...) asparagine). Residues 107–109 (DFQ) form a mediates specificity for BMP ligand region. Cystine bridges form between C110-C124 and C125-C130. A helical transmembrane segment spans residues 153–176 (WLAVLISMAVCIVAMIVFSSCFCY). The Cytoplasmic segment spans residues 177–532 (KHYCKSISSR…KMVESQDVKI (356 aa)). The GS domain occupies 204 to 233 (ESLKDLIDQSQSSGSGSGLPLLVQRTIAKQ). The 292-residue stretch at 234–525 (IQMVRQVGKG…RIKKTLAKMV (292 aa)) folds into the Protein kinase domain. ATP-binding positions include 240–248 (VGKGRYGEV) and K261. The Proton acceptor role is filled by D362.

The protein belongs to the protein kinase superfamily. TKL Ser/Thr protein kinase family. TGFB receptor subfamily. Interacts with low affinity with GDF5; positively regulates chondrocyte differentiation. Interacts with BMP4. Interacts with SCUBE3. Interacts with TSC22D1/TSC-22. Interacts with BMP2; the interaction may induce HAMP expression. Interacts with BMP6. Interacts with heterodimers composed of BMP2 and BMP6 in vitro; the interaction may induce HAMP expression. Mg(2+) is required as a cofactor. Requires Mn(2+) as cofactor. Post-translationally, glycosylated.

The protein resides in the cell membrane. It is found in the cell surface. It catalyses the reaction L-threonyl-[receptor-protein] + ATP = O-phospho-L-threonyl-[receptor-protein] + ADP + H(+). The catalysed reaction is L-seryl-[receptor-protein] + ATP = O-phospho-L-seryl-[receptor-protein] + ADP + H(+). On ligand binding, forms a receptor complex consisting of two type II and two type I transmembrane serine/threonine kinases. Type II receptors phosphorylate and activate type I receptors which autophosphorylate, then bind and activate SMAD transcriptional regulators. Receptor for BMP2, BMP4, GDF5 and GDF6. Positively regulates chondrocyte differentiation through GDF5 interaction. Mediates induction of adipogenesis by GDF6. May promote the expression of HAMP, potentially via its interaction with BMP2. In Rattus norvegicus (Rat), this protein is Bone morphogenetic protein receptor type-1A (Bmpr1a).